The primary structure comprises 185 residues: Superoxide dismutase [Cu-Zn] (185 aa).

The signal sequence occupies residues 1-18; sequence MTAFYKLCGMSMLSLVLA. Cu cation is bound by residues His-85, His-87, and His-102. Cys-92 and Cys-180 are disulfide-bonded. The Zn(2+) site is built by His-102, His-111, His-120, and Asp-123. His-158 is a Cu cation binding site.

The protein belongs to the Cu-Zn superoxide dismutase family. As to quaternary structure, homodimer. Requires Cu cation as cofactor. Zn(2+) is required as a cofactor.

Its subcellular location is the periplasm. It carries out the reaction 2 superoxide + 2 H(+) = H2O2 + O2. Its function is as follows. Destroys radicals which are normally produced within the cells and which are toxic to biological systems. This chain is Superoxide dismutase [Cu-Zn] (sodC), found in Francisella tularensis subsp. holarctica (strain LVS).